The chain runs to 298 residues: Inosose dehydratase (298 aa).

The protein belongs to the IolE/MocC family. Glutathione is required as a cofactor. The cofactor is Co(2+). Mn(2+) serves as cofactor.

The enzyme catalyses scyllo-inosose = 3D-3,5/4-trihydroxycyclohexane-1,2-dione + H2O. It functions in the pathway polyol metabolism; myo-inositol degradation into acetyl-CoA; acetyl-CoA from myo-inositol: step 2/7. In terms of biological role, catalyzes the dehydration of inosose (2-keto-myo-inositol, 2KMI or 2,4,6/3,5-pentahydroxycyclohexanone) to 3D-(3,5/4)-trihydroxycyclohexane-1,2-dione (D-2,3-diketo-4-deoxy-epi-inositol). The chain is Inosose dehydratase from Clostridium botulinum (strain Eklund 17B / Type B).